We begin with the raw amino-acid sequence, 207 residues long: 3-demethoxyubiquinol 3-hydroxylase (207 aa).

6 residues coordinate Fe cation: Glu56, Glu86, His89, Glu138, Glu170, and His173.

The protein belongs to the COQ7 family. It depends on Fe cation as a cofactor.

The protein resides in the cell membrane. It catalyses the reaction a 5-methoxy-2-methyl-3-(all-trans-polyprenyl)benzene-1,4-diol + AH2 + O2 = a 3-demethylubiquinol + A + H2O. The protein operates within cofactor biosynthesis; ubiquinone biosynthesis. Catalyzes the hydroxylation of 2-nonaprenyl-3-methyl-6-methoxy-1,4-benzoquinol during ubiquinone biosynthesis. The polypeptide is 3-demethoxyubiquinol 3-hydroxylase (Cupriavidus taiwanensis (strain DSM 17343 / BCRC 17206 / CCUG 44338 / CIP 107171 / LMG 19424 / R1) (Ralstonia taiwanensis (strain LMG 19424))).